The sequence spans 381 residues: MADPKFQFLPYIAHDQPDVYETPDAPESETSDFYDEEPANESIERLHISTKDSYNKFKGKYLTGNVDFSDRIGKKIRNGYDAVSGEWDLAGEGEKETPIQKCLRLQCEMNELMEEITASQADATKTKEEKASYEAVFDVVGTAKKVLESLKLEQAIGSETVAMGAETEAKKLLTKIEEYKKSVGADPAKTATELVYSSRIAELEHRLHELEVAVGAKPEKISRLAGSAGAGNLIEAVQSISAKAALLQPQQLDLIETRLGNLLLKMAAIDEKSAATGQDANREQKILELYEIAKTTEPIVQILPDMLNRMQTLESLHKYATNFSKLFAELETTQASILKGIASNKTLLTGVQEAFAQNLENVNKEVKKLDERMKTLQEKVK.

The disordered stretch occupies residues 15–39 (DQPDVYETPDAPESETSDFYDEEPA). Residues 24–39 (DAPESETSDFYDEEPA) show a composition bias toward acidic residues. Coiled-coil stretches lie at residues 100–216 (QKCL…AVGA) and 350–381 (GVQE…EKVK).

It belongs to the dynactin subunit 2 family. Subunit of dynactin, a multiprotein complex associated with dynein.

It is found in the cytoplasm. Its subcellular location is the cytoskeleton. The protein localises to the membrane. Functionally, modulates cytoplasmic dynein binding to an organelle, and plays a role in prometaphase chromosome alignment and spindle organization during mitosis. The sequence is that of Dynactin subunit 2 from Aedes aegypti (Yellowfever mosquito).